The chain runs to 388 residues: Phosphopentomutase (388 aa).

Asp9, Asp283, His288, Asp324, His325, and His336 together coordinate Mn(2+).

It belongs to the phosphopentomutase family. Requires Mn(2+) as cofactor.

Its subcellular location is the cytoplasm. The enzyme catalyses 2-deoxy-alpha-D-ribose 1-phosphate = 2-deoxy-D-ribose 5-phosphate. It carries out the reaction alpha-D-ribose 1-phosphate = D-ribose 5-phosphate. The protein operates within carbohydrate degradation; 2-deoxy-D-ribose 1-phosphate degradation; D-glyceraldehyde 3-phosphate and acetaldehyde from 2-deoxy-alpha-D-ribose 1-phosphate: step 1/2. Isomerase that catalyzes the conversion of deoxy-ribose 1-phosphate (dRib-1-P) and ribose 1-phosphate (Rib-1-P) to deoxy-ribose 5-phosphate (dRib-5-P) and ribose 5-phosphate (Rib-5-P), respectively. This is Phosphopentomutase from Deinococcus radiodurans (strain ATCC 13939 / DSM 20539 / JCM 16871 / CCUG 27074 / LMG 4051 / NBRC 15346 / NCIMB 9279 / VKM B-1422 / R1).